Here is a 240-residue protein sequence, read N- to C-terminus: Glutathione S-transferase theta-1 (240 aa).

One can recognise a GST N-terminal domain in the interval 2-82 (GLELYLDLLS…YLTRKYKVPD (81 aa)). Glutathione contacts are provided by residues histidine 40, 53–54 (KV), and 66–67 (ES). Residues 88–220 (DLQARARVDE…HEVILKAKDF (133 aa)) form the GST C-terminal domain.

This sequence belongs to the GST superfamily. Theta family. In terms of assembly, homodimer. As to expression, found in erythrocyte. Expressed at low levels in liver. In lung, expressed at low levels in club cells and ciliated cells at the alveolar/bronchiolar junction. Absent from epithelial cells of larger bronchioles.

The protein resides in the cytoplasm. The catalysed reaction is RX + glutathione = an S-substituted glutathione + a halide anion + H(+). Its function is as follows. Conjugation of reduced glutathione to a wide number of exogenous and endogenous hydrophobic electrophiles. Acts on 1,2-epoxy-3-(4-nitrophenoxy)propane, phenethylisothiocyanate 4-nitrobenzyl chloride and 4-nitrophenethyl bromide. Displays glutathione peroxidase activity with cumene hydroperoxide. This is Glutathione S-transferase theta-1 (GSTT1) from Homo sapiens (Human).